The sequence spans 145 residues: Class I hydrophobin 1 (145 aa).

The first 18 residues, 1 to 18, serve as a signal peptide directing secretion; it reads MYASVIIYTLVALCGVMS. Cystine bridges form between C88/C118, C95/C112, C96/C106, and C119/C128. N-linked (GlcNAc...) asparagine glycosylation occurs at N108.

Belongs to the fungal hydrophobin family. In terms of assembly, self-assembles to form functional amyloid fibrils called rodlets. Self-assembly into fibrillar rodlets occurs spontaneously at hydrophobic:hydrophilic interfaces and the rodlets further associate laterally to form amphipathic monolayers.

It localises to the secreted. It is found in the cell wall. Aerial growth, conidiation, and dispersal of filamentous fungi in the environment rely upon a capability of their secreting small amphipathic proteins called hydrophobins (HPBs) with low sequence identity. Class I can self-assemble into an outermost layer of rodlet bundles on aerial cell surfaces, conferring cellular hydrophobicity that supports fungal growth, development and dispersal; whereas Class II form highly ordered films at water-air interfaces through intermolecular interactions but contribute nothing to the rodlet structure. Hyd1 is a class I hydrophobin that is involved in plant root attachment and colonization, and that might also protect the growing hyphae from locally synthesized plant defense compounds during the first stages of cucumber interaction, allowing this opportunistic, non-pathogenic fungus to colonize the intercellular spaces of the plant root. This is Class I hydrophobin 1 from Trichoderma asperellum (Filamentous fungus).